A 107-amino-acid polypeptide reads, in one-letter code: L-rhamnose mutarotase (107 aa).

Tyrosine 21 is a binding site for substrate. Catalysis depends on histidine 25, which acts as the Proton donor. Substrate contacts are provided by residues tyrosine 44 and 79–80 (WW). The tract at residues 88–107 (ETNPDNSPKTNSLKEVFHLD) is disordered. Residues 90 to 100 (NPDNSPKTNSL) are compositionally biased toward polar residues.

The protein belongs to the rhamnose mutarotase family. Homodimer.

It localises to the cytoplasm. The enzyme catalyses alpha-L-rhamnose = beta-L-rhamnose. It participates in carbohydrate metabolism; L-rhamnose metabolism. In terms of biological role, involved in the anomeric conversion of L-rhamnose. The sequence is that of L-rhamnose mutarotase from Flavobacterium johnsoniae (strain ATCC 17061 / DSM 2064 / JCM 8514 / BCRC 14874 / CCUG 350202 / NBRC 14942 / NCIMB 11054 / UW101) (Cytophaga johnsonae).